The primary structure comprises 377 residues: Exopolygalacturonase (377 aa).

Residues Arg1 to Ser5 form the signal peptide. 5 PbH1 repeats span residues Cys159 to Gly184, Ser186 to Pro207, Ser209 to Ser229, Val239 to Thr260, and Ala269 to Gln290. The active-site Proton donor is the Asp200. The N-linked (GlcNAc...) asparagine glycan is linked to Asn211. His223 is an active-site residue. An N-linked (GlcNAc...) asparagine glycan is attached at Asn345.

Belongs to the glycosyl hydrolase 28 family. In terms of assembly, monomer. Glycosylated. Expressed in pollen (at protein level). Expressed in stem, but not in leaves (at protein level).

Its subcellular location is the secreted. The protein localises to the cell wall. The protein resides in the golgi apparatus. It localises to the endoplasmic reticulum. It is found in the vesicle. The catalysed reaction is [(1-&gt;4)-alpha-D-galacturonosyl](n) + H2O = alpha-D-galacturonate + [(1-&gt;4)-alpha-D-galacturonosyl](n-1). May function in depolymerizing pectin during pollen development, germination, and tube growth. Acts as an exo-polygalacturonase. In Platanus acerifolia (London plane tree), this protein is Exopolygalacturonase.